The following is a 547-amino-acid chain: 2-succinyl-5-enolpyruvyl-6-hydroxy-3-cyclohexene-1-carboxylate synthase (547 aa).

Belongs to the TPP enzyme family. MenD subfamily. In terms of assembly, homodimer. The cofactor is Mg(2+). Requires Mn(2+) as cofactor. It depends on thiamine diphosphate as a cofactor.

It catalyses the reaction isochorismate + 2-oxoglutarate + H(+) = 5-enolpyruvoyl-6-hydroxy-2-succinyl-cyclohex-3-ene-1-carboxylate + CO2. The protein operates within quinol/quinone metabolism; 1,4-dihydroxy-2-naphthoate biosynthesis; 1,4-dihydroxy-2-naphthoate from chorismate: step 2/7. It functions in the pathway quinol/quinone metabolism; menaquinone biosynthesis. Functionally, catalyzes the thiamine diphosphate-dependent decarboxylation of 2-oxoglutarate and the subsequent addition of the resulting succinic semialdehyde-thiamine pyrophosphate anion to isochorismate to yield 2-succinyl-5-enolpyruvyl-6-hydroxy-3-cyclohexene-1-carboxylate (SEPHCHC). The polypeptide is 2-succinyl-5-enolpyruvyl-6-hydroxy-3-cyclohexene-1-carboxylate synthase (Mycobacterium sp. (strain KMS)).